The chain runs to 537 residues: MEEVVVPRHGDHHNINIKYGFFIFALTIIQTIFFLQVKFIQIKRWNSTGRFSKFWSQITNPPIWLMVTVWLLIVIFTGGHKISDFSEEYIISAKRYGRMAYCLIPLNIYLVLRPTNSPLLKPGYYLENMSLHKWTSRIIVFCSTIHAAGYVYKWIKEGAILNKPFRFLNLLGVVVFVFLVVLAIISIRPFRRKVYSTFYLIHNVTAWSMVILITFHARPGVTVFAVISLILLGYQLYLRYYSSYMVNSLKVIDIPTSTLQIIKIPQSNKFPNWLPGSHIRLNYTISKFKSWTTASHPFTVVTIPEDSTNNLTLIVRKPNSFVINPLDSYLVTGPYPSLAPPFFTTANIVNIICGGSGISLGLPIYHHFKSINSTVPVKLVWTIRNQNDTFIMNQLDMTGVQVYVTSIGDTNSEQQENQQQAVPLFVIEEEEEEQGHGLLNNDNENGIELQNMPKTNEESSEANSTNSKNNKDNQERKEYFKFGRPKFDEVFAIDDPTTTYDLDNSWVIACGPDELISDAKRWSKDRGYRFYYEKYEM.

7 helical membrane-spanning segments follow: residues 20–40 (GFFI…VKFI), 58–78 (ITNP…IFTG), 95–112 (RYGR…YLVL), 133–155 (KWTS…YKWI), 167–187 (FLNL…IISI), 194–216 (VYST…ITFH), and 221–238 (VTVF…QLYL). In terms of domain architecture, Ferric oxidoreductase spans 97 to 213 (GRMAYCLIPL…VTAWSMVILI (117 aa)). The FAD-binding FR-type domain occupies 187 to 363 (IRPFRRKVYS…GGSGISLGLP (177 aa)). A disordered region spans residues 432–475 (EEQGHGLLNNDNENGIELQNMPKTNEESSEANSTNSKNNKDNQE).

It belongs to the ferric reductase (FRE) family. AIM14 subfamily.

The protein localises to the membrane. Its function is as follows. Probable cell surface metalloreductase. May be involved in iron or copper homeostasis. The protein is Probable metalloreductase AIM14 (AIM14) of Candida dubliniensis (strain CD36 / ATCC MYA-646 / CBS 7987 / NCPF 3949 / NRRL Y-17841) (Yeast).